Consider the following 155-residue polypeptide: Ribonuclease H (155 aa).

Residues 1-142 (MLKQVEIFTD…CDELARAAAM (142 aa)) enclose the RNase H type-1 domain. Mg(2+) is bound by residues D10, E48, D70, and D134.

The protein belongs to the RNase H family. As to quaternary structure, monomer. Mg(2+) is required as a cofactor.

The protein localises to the cytoplasm. It carries out the reaction Endonucleolytic cleavage to 5'-phosphomonoester.. Functionally, endonuclease that specifically degrades the RNA of RNA-DNA hybrids. The chain is Ribonuclease H from Salmonella paratyphi C (strain RKS4594).